Reading from the N-terminus, the 104-residue chain is Translation initiation factor 1A (104 aa).

Positions methionine 1–valine 14 are enriched in low complexity. The interval methionine 1 to asparagine 20 is disordered. The S1-like domain occupies threonine 12 to threonine 87.

This sequence belongs to the eIF-1A family.

Its function is as follows. Seems to be required for maximal rate of protein biosynthesis. Enhances ribosome dissociation into subunits and stabilizes the binding of the initiator Met-tRNA(I) to 40 S ribosomal subunits. This Methanococcus maripaludis (strain C6 / ATCC BAA-1332) protein is Translation initiation factor 1A (eIF1A).